Consider the following 303-residue polypeptide: E3 ubiquitin-protein ligase CHIP (303 aa).

Residues 1–10 show a composition bias toward basic and acidic residues; that stretch reads MKGKEEKEGG. Residues 1–30 are disordered; that stretch reads MKGKEEKEGGARLGAGGGSPEKSPSAQELK. Lysine 2 participates in a covalent cross-link: Glycyl lysine isopeptide (Lys-Gly) (interchain with G-Cter in ubiquitin). The residue at position 19 (serine 19) is a Phosphoserine. A Glycyl lysine isopeptide (Lys-Gly) (interchain with G-Cter in ubiquitin) cross-link involves residue lysine 22. 2 positions are modified to phosphoserine: serine 23 and serine 25. TPR repeat units follow at residues 26–59, 60–93, and 95–127; these read AQELKEQGNRLFVGRKYPEAAACYGRAITRNPLV, AVYYTNRALCYLKMQQHEQALADCRRALELDGQS, and KAHFFLGQCQLEMESYDEAIANLQRAYSLAKEQ. Positions 101-200 are required for interaction with MAPK7; the sequence is GQCQLEMESY…SHVRAQQACI (100 aa). The segment at 142–196 is required for interaction with and ubiquitination of MYOCD; sequence AKKKRWNSIEERRIHQESELHSYLSRLIAAERERELEECQRNHEGDEDDSHVRAQ. The interval 143 to 197 is required for interaction with FOXO1; it reads KKKRWNSIEERRIHQESELHSYLSRLIAAERERELEECQRNHEGDEDDSHVRAQQ. The tract at residues 143–303 is required for ubiquitination of FOXO1; it reads KKKRWNSIEE…ISENGWVEDY (161 aa). Serine 149 is subject to Phosphoserine. Glycyl lysine isopeptide (Lys-Gly) (interchain with G-Cter in ubiquitin) cross-links involve residues lysine 221 and lysine 255. In terms of domain architecture, U-box spans 226 to 300; the sequence is DIPDYLCGKI…DAFISENGWV (75 aa). Serine 273 carries the post-translational modification Phosphoserine.

As to quaternary structure, homodimer. Interacts with BAG2. Interacts with E2 ubiquitin conjugating enzymes UBE2D1, UBE2D2 and UBE2D3. Detected in a ternary complex containing STUB1, HSPA1A and HSPBP1. Part of a complex composed of STUB1/CHIP, VCP/p97, CHRNA3, and UBXN2A that modulates the ubiquitination and endoplasmic reticulum-associated degradation (ERAD) of CHRNA3. Within the complex UBXN2A acts as a scaffold protein required for the interaction of CHRNA3 with VCP/p97, this interaction also inhibits CHRNA3 ubiquitination by STUB1/CHIP and subsequently ERAD. Interacts with MKKS. Interacts with DNAAF4. Interacts (when monoubiquitinated) with ATXN3. Interacts with UBE2W. Interacts (via the U-box domain) with the UBE2V2-UBE2N heterodimer; the complex has a specific 'Lys-63'-linked polyubiquitination activity. Interacts with DNAJB6. Interacts with FLCN. Interacts with HSP90AA1. Interacts with HSP90. Interacts with UBE2N and UBE2V1. Interacts (via TPR repeats) with HSPA8 (via C-terminus). Interacts (via TPR repeats) with HSPA1A (via C-terminus). Interacts with the non-acetylated form of HSPA1A and HSPA1B. Interacts with SMAD3 and HSP90AB1. Interacts with UBE4B. Interacts with PRMT5. Interacts with MYOCD (via C-terminus). Interacts with FOXO1 (when phosphorylated on 'Ser-256'). Interacts with MAPK7/ERK5; the interaction is enhanced in the presence of IGF1 or MAP2K5 and promotes STUB1/CHIP E3 ligase activity. Interacts with and ubiquitinates ESR1; the interaction is promoted in the absence of estradiol (17-beta-estradiol/E2). Interacts with ESR2. Interacts with and ubiquitinates NFATC3; HSPA1A/HSP70 is required as a co-chaperone. In macrophages, interacts with PAQR3; the interaction promotes PPARG poylubiquitination and STUB1-mediated degradation. Component of the chaperone-assisted selective autophagy (CASA) complex consisting of BAG3, HSPA8/HSC70, HSPB8 and STUB1/CHIP. Post-translationally, monoubiquitinated at Lys-2 following cell stress by UBE2W, promoting the interaction with ATXN3. Auto-ubiquitinated; mediated by UBE2D1 and UBE2D2 and enhanced in the presence of MAP2K5. In terms of tissue distribution, expressed in differentiated myotubes (at protein level). Highly expressed in skeletal muscle, heart, pancreas, brain and placenta. Detected in kidney, liver and lung.

It is found in the cytoplasm. The protein resides in the nucleus. Its subcellular location is the mitochondrion. The catalysed reaction is S-ubiquitinyl-[E2 ubiquitin-conjugating enzyme]-L-cysteine + [acceptor protein]-L-lysine = [E2 ubiquitin-conjugating enzyme]-L-cysteine + N(6)-ubiquitinyl-[acceptor protein]-L-lysine.. It participates in protein modification; protein ubiquitination. In terms of biological role, E3 ubiquitin-protein ligase which targets misfolded chaperone substrates towards proteasomal degradation. Plays a role in the maintenance of mitochondrial morphology and promotes mitophagic removal of dysfunctional mitochondria; thereby acts as a protector against apoptosis in response to cellular stress. Negatively regulates vascular smooth muscle contraction, via degradation of the transcriptional activator MYOCD and subsequent loss of transcription of genes involved in vascular smooth muscle contraction. Promotes survival and proliferation of cardiac smooth muscle cells via ubiquitination and degradation of FOXO1, resulting in subsequent repression of FOXO1-mediated transcription of pro-apoptotic genes. Ubiquitinates ICER-type isoforms of CREM and targets them for proteasomal degradation, thereby acts as a positive effector of MAPK/ERK-mediated inhibition of apoptosis in cardiomyocytes. Inhibits lipopolysaccharide-induced apoptosis and hypertrophy in cardiomyocytes, via ubiquitination and subsequent proteasomal degradation of NFATC3. Collaborates with ATXN3 in the degradation of misfolded chaperone substrates: ATXN3 restricting the length of ubiquitin chain attached to STUB1/CHIP substrates and preventing further chain extension. Ubiquitinates NOS1 in concert with Hsp70 and Hsp40. Modulates the activity of several chaperone complexes, including Hsp70, Hsc70 and Hsp90. Ubiquitinates CHRNA3 targeting it for endoplasmic reticulum-associated degradation in cortical neurons, as part of the STUB1-VCP-UBXN2A complex. Ubiquitinates and promotes ESR1 proteasomal degradation in response to age-related circulating estradiol (17-beta-estradiol/E2) decline, thereby promotes neuronal apoptosis in response to ischemic reperfusion injury. Mediates transfer of non-canonical short ubiquitin chains to HSPA8 that have no effect on HSPA8 degradation. Mediates polyubiquitination of DNA polymerase beta (POLB) at 'Lys-41', 'Lys-61' and 'Lys-81', thereby playing a role in base-excision repair: catalyzes polyubiquitination by amplifying the HUWE1/ARF-BP1-dependent monoubiquitination and leading to POLB-degradation by the proteasome. Mediates polyubiquitination of CYP3A4. Ubiquitinates EPHA2 and may regulate the receptor stability and activity through proteasomal degradation. Acts as a co-chaperone for HSPA1A and HSPA1B chaperone proteins and promotes ubiquitin-mediated protein degradation. Negatively regulates the suppressive function of regulatory T-cells (Treg) during inflammation by mediating the ubiquitination and degradation of FOXP3 in a HSPA1A/B-dependent manner. Catalyzes monoubiquitination of SIRT6, preventing its degradation by the proteasome. Likely mediates polyubiquitination and down-regulates plasma membrane expression of PD-L1/CD274, an immune inhibitory ligand critical for immune tolerance to self and antitumor immunity. Negatively regulates TGF-beta signaling by modulating the basal level of SMAD3 via ubiquitin-mediated degradation. Plays a role in the degradation of TP53. Mediates ubiquitination of RIPK3 leading to its subsequent proteasome-dependent degradation. May regulate myosin assembly in striated muscles together with UBE4B and VCP/p97 by targeting myosin chaperone UNC45B for proteasomal degradation. Ubiquitinates PPARG in macrophages playing a role in M2 macrophages polarization and angiogenesis. This is E3 ubiquitin-protein ligase CHIP from Homo sapiens (Human).